The chain runs to 723 residues: Nuclear hormone receptor HR96 (723 aa).

A DNA-binding region (nuclear receptor) is located at residues 4-79 (PKNCAVCGDK…IGMKSENIMS (76 aa)). 2 NR C4-type zinc fingers span residues 7–27 (CAVC…CESC) and 43–67 (CPFN…LRKC). The disordered stretch occupies residues 95-163 (AKRRLMENGT…QASSPGTQVN (69 aa)). Polar residues-rich tracts occupy residues 122–142 (DSSS…SCGS) and 151–163 (SGRQ…TQVN). Positions 483–723 (EQMKLRELRL…LREIFDLKNH (241 aa)) constitute an NR LBD domain.

Belongs to the nuclear hormone receptor family. NR1 subfamily.

The protein localises to the nucleus. In terms of biological role, binds selectively to the HSP27 20E response element. This is Nuclear hormone receptor HR96 (Hr96) from Drosophila melanogaster (Fruit fly).